We begin with the raw amino-acid sequence, 263 residues long: uncharacterized protein (263 aa).

Residue 12 to 19 (KGGVGKTT) coordinates ATP.

This sequence belongs to the ParA family. MinD subfamily.

This is an uncharacterized protein from Methanocaldococcus jannaschii (strain ATCC 43067 / DSM 2661 / JAL-1 / JCM 10045 / NBRC 100440) (Methanococcus jannaschii).